We begin with the raw amino-acid sequence, 220 residues long: Ribosomal RNA large subunit methyltransferase E (220 aa).

S-adenosyl-L-methionine is bound by residues Gly-60, Trp-62, Asp-92, Asp-108, and Asp-133. Lys-173 acts as the Proton acceptor in catalysis.

It belongs to the class I-like SAM-binding methyltransferase superfamily. RNA methyltransferase RlmE family.

Its subcellular location is the cytoplasm. The catalysed reaction is uridine(2552) in 23S rRNA + S-adenosyl-L-methionine = 2'-O-methyluridine(2552) in 23S rRNA + S-adenosyl-L-homocysteine + H(+). Its function is as follows. Specifically methylates the uridine in position 2552 of 23S rRNA at the 2'-O position of the ribose in the fully assembled 50S ribosomal subunit. The chain is Ribosomal RNA large subunit methyltransferase E from Burkholderia thailandensis (strain ATCC 700388 / DSM 13276 / CCUG 48851 / CIP 106301 / E264).